The sequence spans 501 residues: 7-alpha-hydroxycholest-4-en-3-one 12-alpha-hydroxylase (501 aa).

The chain crosses the membrane as a helical span at residues 1–21; the sequence is MVLWGPVLGALLVVIAGYLCL. Serine 326 bears the Phosphoserine mark. Cysteine 440 lines the heme pocket.

The protein belongs to the cytochrome P450 family. It depends on heme as a cofactor. As to expression, liver.

The protein resides in the endoplasmic reticulum membrane. The protein localises to the microsome membrane. The enzyme catalyses 7alpha-hydroxycholest-4-en-3-one + reduced [NADPH--hemoprotein reductase] + O2 = 7alpha,12alpha-dihydroxycholest-4-en-3-one + oxidized [NADPH--hemoprotein reductase] + H2O + H(+). It carries out the reaction 5beta-cholestane-3alpha,7alpha-diol + reduced [NADPH--hemoprotein reductase] + O2 = 5beta-cholestane-3alpha,7alpha,12alpha-triol + oxidized [NADPH--hemoprotein reductase] + H2O + H(+). The catalysed reaction is chenodeoxycholate + reduced [NADPH--hemoprotein reductase] + O2 = cholate + oxidized [NADPH--hemoprotein reductase] + H2O + H(+). Its pathway is lipid metabolism; bile acid biosynthesis. A cytochrome P450 monooxygenase involved in primary bile acid biosynthesis. Catalyzes the 12alpha-hydroxylation of 7alpha-hydroxy-4-cholesten-3-one, an intermediate metabolite in cholic acid biosynthesis. Controls biliary balance of cholic acid and chenodeoxycholic acid, ultimately regulating the intestinal absorption of dietary lipids. Mechanistically, uses molecular oxygen inserting one oxygen atom into a substrate, and reducing the second into a water molecule, with two electrons provided by NADPH via cytochrome P450 reductase (CPR; NADPH--hemoprotein reductase). The chain is 7-alpha-hydroxycholest-4-en-3-one 12-alpha-hydroxylase from Homo sapiens (Human).